The sequence spans 192 residues: Fe/S biogenesis protein NfuA (192 aa).

Residues C149 and C152 each coordinate [4Fe-4S] cluster.

Belongs to the NfuA family. In terms of assembly, homodimer. [4Fe-4S] cluster is required as a cofactor.

Involved in iron-sulfur cluster biogenesis. Binds a 4Fe-4S cluster, can transfer this cluster to apoproteins, and thereby intervenes in the maturation of Fe/S proteins. Could also act as a scaffold/chaperone for damaged Fe/S proteins. The protein is Fe/S biogenesis protein NfuA of Idiomarina loihiensis (strain ATCC BAA-735 / DSM 15497 / L2-TR).